Consider the following 233-residue polypeptide: Chromosome partition protein MukE (233 aa).

Residues 207–233 (SLSLHDESDDADVTMGNAADSVEDEQE) form a disordered region.

The protein belongs to the MukE family. In terms of assembly, interacts, and probably forms a ternary complex, with MukF and MukB. The complex formation is stimulated by calcium or magnesium.

It localises to the cytoplasm. The protein localises to the nucleoid. Functionally, involved in chromosome condensation, segregation and cell cycle progression. May participate in facilitating chromosome segregation by condensation DNA from both sides of a centrally located replisome during cell division. Probably acts via its interaction with MukB and MukF. The protein is Chromosome partition protein MukE of Yersinia pestis.